Consider the following 527-residue polypeptide: MPPVKAEDLVVHAVKEQFAGLDYCITSPPPWITTVLVGFQHYLVMLGTTVLIATIIVPLMGGGHAEKAIVIQTILFLSGINTLLQVHFGTRLPAVMSGSYTYIYPAVAIILSPRYALLIDPLERFVFTMRSLQGALIIAGVFQAVVGFFGIWRVFIRFLSPLAAVPFVTLTGLGLFFFAFPGVTKCIEVGLPALVLLVIFAEYASHLFAKGSFVFSRCAVLVTVVIIWIYAEILTAAGAYNERGPVTQFSCRADRSGIIQGSPWVRFPYPFQWGYPIFCFQDCFAMLAASFASLIESTGTLIAVSRYSGATFCPPSVFSRGIGWEGISIILDGMCGTLTGTAASVENAGLLAVTRVGSRRVIKISALFMIFFSLFAKFGAVLASIPLPIFAALYCVLFAYSAGAGFSLLQYCNLNSLRTKFILSISLFLGLSIPQYFRVYEMFFGFGPVHTHSVAFNVMVNVIFSSPATVAAILAYLLDCTHLYWEASVKKDRGWFWWEKFKSYKYDGRSEEFYRLPYGLSRYFPSL.

The next 12 helical transmembrane spans lie at 43-63 (LVML…MGGG), 68-88 (AIVI…QVHF), 92-112 (LPAV…IILS), 132-152 (LQGA…FGIW), 163-183 (AAVP…FPGV), 189-209 (VGLP…HLFA), 219-239 (AVLV…AAGA), 284-304 (FAML…LIAV), 361-383 (VIKI…AVLA), 387-409 (LPIF…FSLL), 427-447 (LFLG…FGFG), and 458-478 (VMVN…AYLL).

The protein belongs to the nucleobase:cation symporter-2 (NCS2) (TC 2.A.40) family. In terms of tissue distribution, highly expressed in roots.

The protein resides in the membrane. With respect to regulation, inhibited by excess of xanthin, uric acid and ascorbic acid, and by 100 um N,N-dicyclohexylcarbodiimide and 30 um carbonyl cyanide m-chlorophenyl-hydrazone. Its function is as follows. High affinity uric acid-xanthine transporter in A.nidulans. Binds, but cannot transport ascorbic acid. In Zea mays (Maize), this protein is Nucleobase-ascorbate transporter LPE1 (LPE1).